The primary structure comprises 282 residues: NADPH-dependent 7-cyano-7-deazaguanine reductase (282 aa).

88–90 (IES) provides a ligand contact to substrate. An NADPH-binding site is contributed by 90-91 (SK). Residue cysteine 190 is the Thioimide intermediate of the active site. The Proton donor role is filled by aspartate 197. A substrate-binding site is contributed by 229-230 (HE). Position 258–259 (258–259 (RG)) interacts with NADPH.

The protein belongs to the GTP cyclohydrolase I family. QueF type 2 subfamily. Homodimer.

The protein localises to the cytoplasm. The catalysed reaction is 7-aminomethyl-7-carbaguanine + 2 NADP(+) = 7-cyano-7-deazaguanine + 2 NADPH + 3 H(+). It participates in tRNA modification; tRNA-queuosine biosynthesis. Functionally, catalyzes the NADPH-dependent reduction of 7-cyano-7-deazaguanine (preQ0) to 7-aminomethyl-7-deazaguanine (preQ1). The chain is NADPH-dependent 7-cyano-7-deazaguanine reductase from Escherichia coli O157:H7.